A 159-amino-acid chain; its full sequence is Cystatin-9 (159 aa).

A signal peptide spans Met-1 to Ala-28.

This sequence belongs to the cystatin family. In terms of tissue distribution, expressed in heart, placenta, lung, liver, skeletal muscle and pancreas. Not expressed in brain. Expressed in epididymis, kidney, testis, spinal cord, and thymus with a strong expression in epididymis and kidney and a weak expression in the spinal cord and thymus.

Its subcellular location is the secreted. Its function is as follows. May be involved in testis development. May play a role in hematopoietic differentiation or inflammation. Has immunomodulatory and antimicrobial functions against Francisella tularensis, a Gram-negative bacteria. The chain is Cystatin-9 (CST9) from Homo sapiens (Human).